The primary structure comprises 434 residues: MTKTDERKPAIFLLSLGCSKNTVDSERLTAQAVASGLTFTDNVDEADIILINTCGFIKDAKQESIDETLAAIGKKEEGVVREVYVMGCLVELYRKELAEEMPEIDGLFGTRELPEVLAAIGAKYREELFDRRELLTPPHYAFLKIAEGCNRRCSFCSIPKIRGPYVSQPIEQLLREAALLQQQGVKELNLIAQDISVYGYDLYGKSALNDLTLRLSDMGFNWIRLLYAYPLNFPLEVISTMRERPNVCNYIDMPLQHINDRILKSMQRGIGRKATEQLIDDIRQKNPDIRLRTTMIAGYPGETRAEFEELLDFIRQTRFDRLGCFPYRHEEHASAYALEDTVSDEEKEKRVGELMELQEGISASLNRKLEGQTLKVLIDRIEESVAYARTEYDAPEVDNDVIIEIGDEAVEEGDFRQVMIEDSTAYELFGRISG.

In terms of domain architecture, MTTase N-terminal spans proline 9 to arginine 125. The [4Fe-4S] cluster site is built by cysteine 18, cysteine 54, cysteine 88, cysteine 149, cysteine 153, and cysteine 156. Positions leucine 135 to serine 364 constitute a Radical SAM core domain. The 68-residue stretch at arginine 367–glycine 434 folds into the TRAM domain.

Belongs to the methylthiotransferase family. RimO subfamily. The cofactor is [4Fe-4S] cluster.

It is found in the cytoplasm. It catalyses the reaction L-aspartate(89)-[ribosomal protein uS12]-hydrogen + (sulfur carrier)-SH + AH2 + 2 S-adenosyl-L-methionine = 3-methylsulfanyl-L-aspartate(89)-[ribosomal protein uS12]-hydrogen + (sulfur carrier)-H + 5'-deoxyadenosine + L-methionine + A + S-adenosyl-L-homocysteine + 2 H(+). Its function is as follows. Catalyzes the methylthiolation of an aspartic acid residue of ribosomal protein uS12. This is Ribosomal protein uS12 methylthiotransferase RimO from Chlorobaculum tepidum (strain ATCC 49652 / DSM 12025 / NBRC 103806 / TLS) (Chlorobium tepidum).